Consider the following 177-residue polypeptide: MSRVGKLPITIPEGVKVGLNDLEVKISGPKGELSKTFKGNIAIIMEENKLVVKPLAVNKNARSMWGTARSIIYNMVTGVKEGFKLKLEINGVGYRAMVKGKYLNLMLAKSHNTKIEIPSNIKIDLPKQNIILLEGIDKEKLGQFASIIIKQRPPEPYKGKGIKFENKFIQRKEGKKN.

The protein belongs to the universal ribosomal protein uL6 family. In terms of assembly, part of the 50S ribosomal subunit.

This protein binds to the 23S rRNA, and is important in its secondary structure. It is located near the subunit interface in the base of the L7/L12 stalk, and near the tRNA binding site of the peptidyltransferase center. The polypeptide is Large ribosomal subunit protein uL6 (Rickettsia typhi (strain ATCC VR-144 / Wilmington)).